We begin with the raw amino-acid sequence, 142 residues long: Ribosome maturation factor RimP (142 aa).

The protein belongs to the RimP family.

It localises to the cytoplasm. Functionally, required for maturation of 30S ribosomal subunits. The polypeptide is Ribosome maturation factor RimP (Nitrosospira multiformis (strain ATCC 25196 / NCIMB 11849 / C 71)).